We begin with the raw amino-acid sequence, 504 residues long: Light-independent protochlorophyllide reductase subunit B (504 aa).

Asp36 contacts [4Fe-4S] cluster. Asp279 serves as the catalytic Proton donor. 414–415 (GL) is a binding site for substrate.

This sequence belongs to the ChlB/BchB/BchZ family. Protochlorophyllide reductase is composed of three subunits; BchL, BchN and BchB. Forms a heterotetramer of two BchB and two BchN subunits. Requires [4Fe-4S] cluster as cofactor.

It catalyses the reaction chlorophyllide a + oxidized 2[4Fe-4S]-[ferredoxin] + 2 ADP + 2 phosphate = protochlorophyllide a + reduced 2[4Fe-4S]-[ferredoxin] + 2 ATP + 2 H2O. The protein operates within porphyrin-containing compound metabolism; bacteriochlorophyll biosynthesis (light-independent). Functionally, component of the dark-operative protochlorophyllide reductase (DPOR) that uses Mg-ATP and reduced ferredoxin to reduce ring D of protochlorophyllide (Pchlide) to form chlorophyllide a (Chlide). This reaction is light-independent. The NB-protein (BchN-BchB) is the catalytic component of the complex. This chain is Light-independent protochlorophyllide reductase subunit B, found in Acidiphilium rubrum.